We begin with the raw amino-acid sequence, 271 residues long: Non-homologous end joining protein Ku (271 aa).

In terms of domain architecture, Ku spans 12 to 194 (KLSLVTCPVV…DQKPVPELLS (183 aa)). Residues 225–249 (EAKKTPPAKKTKAEEKTGKGSAESN) form a disordered region.

Belongs to the prokaryotic Ku family. As to quaternary structure, homodimer. Interacts with LigD.

With LigD forms a non-homologous end joining (NHEJ) DNA repair enzyme, which repairs dsDNA breaks with reduced fidelity. Binds linear dsDNA with 5'- and 3'- overhangs but not closed circular dsDNA nor ssDNA. Recruits and stimulates the ligase activity of LigD. The polypeptide is Non-homologous end joining protein Ku (Methylocella silvestris (strain DSM 15510 / CIP 108128 / LMG 27833 / NCIMB 13906 / BL2)).